A 525-amino-acid chain; its full sequence is Protein kinase PINOID 2 (525 aa).

Positions 1–27 are disordered; it reads MANSSIFYKDNESDYESSTVGPDSSRR. The region spanning 87-465 is the Protein kinase domain; that stretch reads FRLLKRLGSG…SIEIKRHEFF (379 aa). Residues 93-101 and K118 each bind ATP; that span reads LGSGDIGSV. The active-site Proton acceptor is the D214. Residues 466 to 525 enclose the AGC-kinase C-terminal domain; that stretch reads EGVNWALIRSIKPPWVPKEETSHKTKGDNRSVNYYLPPRFMMSRKERNEPYHVSNYFDYF.

It belongs to the protein kinase superfamily. Ser/Thr protein kinase family.

It catalyses the reaction L-seryl-[protein] + ATP = O-phospho-L-seryl-[protein] + ADP + H(+). It carries out the reaction L-threonyl-[protein] + ATP = O-phospho-L-threonyl-[protein] + ADP + H(+). In terms of biological role, serine/threonine-protein kinase involved in the regulation of auxin signaling. Plays a minor role in the regulation of cellular auxin efflux and cotyledon organogenesis. This chain is Protein kinase PINOID 2 (PID2), found in Arabidopsis thaliana (Mouse-ear cress).